A 289-amino-acid chain; its full sequence is RING-H2 finger protein ATL29 (289 aa).

A helical membrane pass occupies residues 25–45 (VILTVILLVFFFIGFFTLYFC). The RING-type; atypical zinc finger occupies 110-152 (CAICLLEFDGDHVLRLLTTCYHVFHQECIDLWFESHRTCPVCR). A disordered region spans residues 179 to 237 (TSDDEEDDHHRQQTTTQIDTWPSSGQTSSIKKEQNLPEKFSRSHSTGHSIVRNKPEEED). Positions 191–207 (QTTTQIDTWPSSGQTSS) are enriched in polar residues. A compositionally biased stretch (basic and acidic residues) spans 208 to 219 (IKKEQNLPEKFS).

The protein belongs to the RING-type zinc finger family. ATL subfamily.

The protein localises to the membrane. It carries out the reaction S-ubiquitinyl-[E2 ubiquitin-conjugating enzyme]-L-cysteine + [acceptor protein]-L-lysine = [E2 ubiquitin-conjugating enzyme]-L-cysteine + N(6)-ubiquitinyl-[acceptor protein]-L-lysine.. The protein operates within protein modification; protein ubiquitination. The chain is RING-H2 finger protein ATL29 (ATL29) from Arabidopsis thaliana (Mouse-ear cress).